The primary structure comprises 850 residues: MKLVIFDGNSILYRAFFALPELTTSNNIPTNAIYGFVNVILKYLEQEKPDYVAVAFDKRGREARKSEYEEYKANRKPMPDNLQVQIPYVREILYAFNIPIIEFEGYEADDVIGSLVNQFKNTGLDIVIITGDRDTLQLLDKNVVVKIVSTKFDKTVEDLYTVENVKEKYGVWANQVPDYKALVGDQSDNIPGVKGIGEKSAQKLLEEYSSLEEIYQNLDKIKSSIREKLEAGKDMAFLSKRLATIVCDLPLNVKLEDLRTKEWNKERLYEILVQLEFKSIIKRLGLSEVVQFEFVQQRTDIPDVEQKELESISQIRSKEIPLMFVQGEKCFYLYDQESNTVFITSNKLLIEEILKSDTVKIMYDLKNIFHQLNLEDTNNIKNCEDVMIASYVLDSTRSSYELETLFVSYLNTDIEAVKKDKKIVSVVLLKRLWDELLRLIDLNSCQFLYENIERPLIPVLYEMEKTGFKVDRDALIQYTKEIENKILKLETQIYQIAGEWFNINSPKQLSYILFEKLKLPVIKKTKTGYSTDAEVLEELFDKHEIVPLILDYRMYTKILTTYCQGLLQAINPSSGRVHTTFIQTGTATGRLASSDPNLQNIPVKYDEGKLIRKVFVPEGGHVLIDADYSQIELRILAHISEDERLISAFKNNVDIHSQTAAEVFGVDIADVTPEMRSQAKAVNFGIVYGISDYGLARDIKISRKEAAEFINKYFERYPKVKEYLDNTVKFARDNGFVLTLFNRKRYIKDIKSTNRNLRGYAERIAMNSPIQGSAADIMKLAMIKVYQKLKENNLKSKIILQVHDELLIEAPYEEKDIVKEIVKREMENAVALKVPLVVEVKEGLNWYETK.

In terms of domain architecture, 5'-3' exonuclease spans 1–288 (MKLVIFDGNS…SIIKRLGLSE (288 aa)). The interval 470-850 (VDRDALIQYT…KEGLNWYETK (381 aa)) is polymerase.

This sequence belongs to the DNA polymerase type-A family.

It catalyses the reaction DNA(n) + a 2'-deoxyribonucleoside 5'-triphosphate = DNA(n+1) + diphosphate. In terms of biological role, in addition to polymerase activity, this DNA polymerase exhibits 3'-5' and 5'-3' exonuclease activity. The protein is DNA polymerase I (polA) of Caldicellulosiruptor bescii (strain ATCC BAA-1888 / DSM 6725 / KCTC 15123 / Z-1320) (Anaerocellum thermophilum).